Consider the following 427-residue polypeptide: Methylthioribose kinase 2 (427 aa).

ATP-binding positions include 49-53 (DGNLN), lysine 68, and 122-124 (RYI). Position 51 (asparagine 51) interacts with substrate. Aspartate 243 contributes to the substrate binding site. Residue 260 to 262 (DPE) participates in ATP binding. Arginine 370 is a binding site for substrate.

The protein belongs to the methylthioribose kinase family. As to quaternary structure, homodimer.

The enzyme catalyses 5-(methylsulfanyl)-D-ribose + ATP = 5-(methylsulfanyl)-alpha-D-ribose 1-phosphate + ADP + H(+). It participates in amino-acid biosynthesis; L-methionine biosynthesis via salvage pathway; S-methyl-5-thio-alpha-D-ribose 1-phosphate from S-methyl-5'-thioadenosine (hydrolase route): step 2/2. In terms of biological role, catalyzes the phosphorylation of methylthioribose into methylthioribose-1-phosphate. This is Methylthioribose kinase 2 (MTK2) from Oryza sativa subsp. japonica (Rice).